The chain runs to 582 residues: Insulin-like growth factor 2 mRNA-binding protein 3 (582 aa).

RRM domains follow at residues 2–75 (NKLY…HSVP) and 81–156 (CKLQ…YIPD). The interval 164-190 (PAVGGRRGFNPRGPPRQGSPSLGARPK) is disordered. S182 is modified (phosphoserine). KH domains lie at 194–259 (DVPL…CRNI), 275–342 (EIPL…EEEI), 408–473 (SETV…QGRI), and 490–556 (KLEA…QRKI). The interval 562–582 (QVRRQQQPKPSAAGPPVARRK) is disordered.

This sequence belongs to the RRM IMP/VICKZ family. Homodimer and multimer.

The protein localises to the cytoplasm. It localises to the nucleus. It is found in the P-body. Its subcellular location is the stress granule. RNA-binding factor that may recruit target transcripts to cytoplasmic protein-RNA complexes (mRNPs). This transcript 'caging' into mRNPs allows mRNA transport and transient storage. It also modulates the rate and location at which target transcripts encounter the translational apparatus and shields them from endonuclease attacks or microRNA-mediated degradation. Preferentially binds to N6-methyladenosine (m6A)-containing mRNAs and increases their stability. Involved in neuronal crest migration. The sequence is that of Insulin-like growth factor 2 mRNA-binding protein 3 (igf2bp3) from Danio rerio (Zebrafish).